The primary structure comprises 407 residues: SERPINE1 mRNA-binding protein 1 (407 aa).

The residue at position 25 (serine 25) is a Phosphoserine. The interval 33–227 is disordered; the sequence is AAENKKKEAG…GSGSHNWGTV (195 aa). The segment covering 51–68 has biased composition (low complexity); the sequence is AKSAAQAAAQTNSNAAGK. At lysine 52 the chain carries N6-acetyllysine; alternate. Lysine 52 is covalently cross-linked (Glycyl lysine isopeptide (Lys-Gly) (interchain with G-Cter in SUMO1); alternate). Lysine 68 carries the post-translational modification N6-acetyllysine. Basic and acidic residues-rich tracts occupy residues 70–80, 89–114, and 122–162; these read LRKESQKDRKN, VDKK…RRPD, and KIID…DRPI. A Glycyl lysine isopeptide (Lys-Gly) (interchain with G-Cter in SUMO1); alternate cross-link involves residue lysine 102. Lysine 102 is covalently cross-linked (Glycyl lysine isopeptide (Lys-Gly) (interchain with G-Cter in SUMO2)). Lysine 102 is covalently cross-linked (Glycyl lysine isopeptide (Lys-Gly) (interchain with G-Cter in SUMO2); alternate). Lysine 122 and lysine 140 each carry N6-acetyllysine. The segment covering 164–182 has biased composition (gly residues); that stretch reads GRGGLGRGRGGRGRGMGRG. Arginine 165 and arginine 188 each carry omega-N-methylarginine. The span at 183-199 shows a compositional bias: basic and acidic residues; it reads DGFDSRGKREFDRHSGS. A phosphoserine mark is found at serine 197, serine 199, serine 203, serine 205, and serine 208. Lysine 211 is subject to N6-acetyllysine; alternate. Residue lysine 211 forms a Glycyl lysine isopeptide (Lys-Gly) (interchain with G-Cter in SUMO2); alternate linkage. Omega-N-methylarginine is present on arginine 216. Serine 221 bears the Phosphoserine mark. Residue threonine 226 is modified to Phosphothreonine. Residue lysine 228 forms a Glycyl lysine isopeptide (Lys-Gly) (interchain with G-Cter in SUMO1); alternate linkage. Residue lysine 228 forms a Glycyl lysine isopeptide (Lys-Gly) (interchain with G-Cter in SUMO2); alternate linkage. At serine 234 the chain carries Phosphoserine. Positions 242-256 are enriched in polar residues; the sequence is ISYNCSDLDQSNVTE. Disordered stretches follow at residues 242 to 291 and 327 to 407; these read ISYN…TLDE and SKSE…PALA. Positions 261–274 are enriched in basic and acidic residues; the sequence is GEEHPVADTENKEN. Lysine 280 participates in a covalent cross-link: Glycyl lysine isopeptide (Lys-Gly) (interchain with G-Cter in SUMO1); alternate. A Glycyl lysine isopeptide (Lys-Gly) (interchain with G-Cter in SUMO2) cross-link involves residue lysine 280. Residue lysine 280 forms a Glycyl lysine isopeptide (Lys-Gly) (interchain with G-Cter in SUMO2); alternate linkage. Basic and acidic residues-rich tracts occupy residues 281–291 and 327–341; these read EEGPKEMTLDE and SKSE…VMDH. Position 328 is an N6-acetyllysine (lysine 328). Position 329 is a phosphoserine (serine 329). The span at 362–371 shows a compositional bias: gly residues; sequence GRPGRGGRGG. Omega-N-methylarginine occurs at positions 363, 366, and 369. 2 positions are modified to phosphoserine: serine 391 and serine 393.

This sequence belongs to the SERBP1-HABP4 family. Associates with mature 80S ribosomes. Interacts with EEF2/eEF2; interaction sequesters EEF2/eEF2 at the A-site of the ribosome, thereby blocking the interaction sites of the mRNA-tRNA complex, promoting ribosome stabilization and hibernation. Interacts with SPIN1. Interacts with CHD3 and TDRD3. Interacts with ZDHHC17 (via ANK repeats). Post-translationally, phosphorylation by MTOR inhibits SERBP1 and relieves ribosome hibernation.

Functionally, ribosome-binding protein that promotes ribosome hibernation, a process during which ribosomes are stabilized in an inactive state and preserved from proteasomal degradation. Acts via its association with EEF2/eEF2 factor, sequestering EEF2/eEF2 at the A-site of the ribosome and promoting ribosome stabilization and storage in an inactive state. May also play a role in the regulation of mRNA stability: binds to the 3'-most 134 nt of the SERPINE1/PAI1 mRNA, a region which confers cyclic nucleotide regulation of message decay. Seems to play a role in PML-nuclear bodies formation. The sequence is that of SERPINE1 mRNA-binding protein 1 from Oryctolagus cuniculus (Rabbit).